Reading from the N-terminus, the 663-residue chain is DNA ligase 1 (663 aa).

Residues 30-34 (DAEYD) and 78-79 (SL) contribute to the NAD(+) site. Lysine 105 serves as the catalytic N6-AMP-lysine intermediate. Positions 126, 161, and 294 each coordinate NAD(+). Cysteine 389, cysteine 392, cysteine 407, and cysteine 412 together coordinate Zn(2+). In terms of domain architecture, BRCT spans 574-663 (AAGAPLAGKT…WAQLIEAKLV (90 aa)).

This sequence belongs to the NAD-dependent DNA ligase family. LigA subfamily. Mg(2+) serves as cofactor. Requires Mn(2+) as cofactor.

The enzyme catalyses NAD(+) + (deoxyribonucleotide)n-3'-hydroxyl + 5'-phospho-(deoxyribonucleotide)m = (deoxyribonucleotide)n+m + AMP + beta-nicotinamide D-nucleotide.. Functionally, DNA ligase that catalyzes the formation of phosphodiester linkages between 5'-phosphoryl and 3'-hydroxyl groups in double-stranded DNA using NAD as a coenzyme and as the energy source for the reaction. It is essential for DNA replication and repair of damaged DNA. This chain is DNA ligase 1, found in Nocardia farcinica (strain IFM 10152).